We begin with the raw amino-acid sequence, 253 residues long: 5'-nucleotidase SurE (253 aa).

D8, D9, S40, and N93 together coordinate a divalent metal cation.

It belongs to the SurE nucleotidase family. It depends on a divalent metal cation as a cofactor.

It localises to the cytoplasm. It catalyses the reaction a ribonucleoside 5'-phosphate + H2O = a ribonucleoside + phosphate. In terms of biological role, nucleotidase that shows phosphatase activity on nucleoside 5'-monophosphates. In Methylobacterium sp. (strain 4-46), this protein is 5'-nucleotidase SurE.